A 234-amino-acid polypeptide reads, in one-letter code: UPF0173 metal-dependent hydrolase RL2074 (234 aa).

Belongs to the UPF0173 family.

This chain is UPF0173 metal-dependent hydrolase RL2074, found in Rhizobium johnstonii (strain DSM 114642 / LMG 32736 / 3841) (Rhizobium leguminosarum bv. viciae).